The primary structure comprises 138 residues: Small ribosomal subunit protein uS11c (138 aa).

A disordered region spans residues 1–24; sequence MAKPIPKVGSRRNGRSSARKSARR. Positions 9-24 are enriched in basic residues; the sequence is GSRRNGRSSARKSARR.

It belongs to the universal ribosomal protein uS11 family. In terms of assembly, part of the 30S ribosomal subunit.

It localises to the plastid. The protein localises to the chloroplast. This Gossypium hirsutum (Upland cotton) protein is Small ribosomal subunit protein uS11c.